Here is a 373-residue protein sequence, read N- to C-terminus: tRNA-specific 2-thiouridylase MnmA (373 aa).

ATP contacts are provided by residues 12–19 and M38; that span reads GMSGGVDS. The tract at residues 98–100 is interaction with target base in tRNA; that stretch reads NPD. C103 serves as the catalytic Nucleophile. C103 and C200 form a disulfide bridge. ATP is bound at residue G127. Residues 150-152 form an interaction with tRNA region; that stretch reads KDQ. C200 acts as the Cysteine persulfide intermediate in catalysis. An interaction with tRNA region spans residues 312 to 313; that stretch reads RY.

This sequence belongs to the MnmA/TRMU family.

The protein localises to the cytoplasm. The enzyme catalyses S-sulfanyl-L-cysteinyl-[protein] + uridine(34) in tRNA + AH2 + ATP = 2-thiouridine(34) in tRNA + L-cysteinyl-[protein] + A + AMP + diphosphate + H(+). In terms of biological role, catalyzes the 2-thiolation of uridine at the wobble position (U34) of tRNA, leading to the formation of s(2)U34. This chain is tRNA-specific 2-thiouridylase MnmA, found in Streptococcus pneumoniae (strain ATCC 700669 / Spain 23F-1).